We begin with the raw amino-acid sequence, 174 residues long: Small ribosomal subunit protein uS5 (174 aa).

In terms of domain architecture, S5 DRBM spans 18–81; it reads LKDRLVSVNR…EDAKKNLVKI (64 aa).

This sequence belongs to the universal ribosomal protein uS5 family. In terms of assembly, part of the 30S ribosomal subunit. Contacts proteins S4 and S8.

Functionally, with S4 and S12 plays an important role in translational accuracy. Located at the back of the 30S subunit body where it stabilizes the conformation of the head with respect to the body. This Flavobacterium psychrophilum (strain ATCC 49511 / DSM 21280 / CIP 103535 / JIP02/86) protein is Small ribosomal subunit protein uS5.